A 55-amino-acid polypeptide reads, in one-letter code: Lantibiotic epilancin (55 aa).

The propeptide at 1-24 (MNNSLFDLNLNKGVETQKSDLSPQ) is cleaved by ElxP. D-lactate; by the dehydratase ElxB and the dehydrogenase ElxO is present on S25. Residue S27 is modified to 2,3-didehydroalanine (Ser); by the dehydratase ElxB. Residue T31 is modified to 2,3-didehydrobutyrine; by the dehydratase ElxB. 2,3-didehydroalanine (Ser); by the dehydratase ElxB is present on S32. Residues 36-40 (SKKYC) constitute a cross-link (lanthionine (Ser-Cys); by the dehydratase ElxB and the cyclase ElxC). 2 cross-links (beta-methyllanthionine (Thr-Cys); by the dehydratase ElxB and the cyclase ElxC) span residues 44–47 (TLTC) and 46–49 (TCGC). At T52 the chain carries 2,3-didehydrobutyrine; by the dehydratase ElxB.

The protein belongs to the type A lantibiotic family. In terms of processing, maturation of this lantibiotic involves the enzymatic conversion of Thr, and Ser into dehydrated AA by ElxB and the formation of thioether bonds with cysteine by the cyclase ElxC. The next steps are cleavage of the leader peptide by ElxP and membrane translocation by ElxT. The leader peptide may be removed before membrane translocation, in contrast to other lantibiotics for which the cleavage occur after translocation. This is suggested by the probable cytoplasmic localization of the serine protease ElxP that cleaves the leader peptide. Post-translationally, it is not established whether the 2,3-didehydrobutyrine is the E- or Z-isomer. The N-terminal D-lactate is probably produced by dehydration of Ser-25 by ElxB, followed by proteolytic removal of the leader peptide by the serine protease ElxP and hydrolysis of the resulting new N-terminal dehydroalanine. This hydrolysis may occur spontaneously. The pyruvate group thus formed is reduced to D-lactate by the NADPH-dependent oxidoreductase ElxO. This N-terminal D-lactate protects the lantibiotic against degradation against aminopeptidase.

Its function is as follows. Lanthionine-containing peptide antibiotic (lantibiotic) active on Gram-positive bacteria such as staphylococci, enterococci and streptococci. The bactericidal activity of lantibiotics is based on depolarization of energized bacterial cytoplasmic membranes, initiated by the formation of aqueous transmembrane pores. This is Lantibiotic epilancin (elkA) from Staphylococcus epidermidis.